A 320-amino-acid chain; its full sequence is MSRGILYYQVGEALESYFLIKSATKAVASNGKPFLTLILSDHTGEIEAKLWGCSPEDEATFVSGAIVHISGQLSEYRGRQQLKIGSIRPTTAMDQVKVSDFVRSAPLSPDDMLEQITQYIFEMKNPKIQRMTRHLLKKHQTAFLEYPAATTNHHEFVSGLAYHVVCMLNVAKSLAALYPTLDTDLLYAGIILHDLGKVKELSGPIDTTYTIEGKLLGHISILVNEIGETANELGIEGEEVIILQHLVLAHHSKGEWGSPKPPLIREAEILHMIDNIDAKMNMMDRALERVQPGEFSERIKAMDNRSFYKPNFHEPPLDLS.

A DNA-binding region (OB) is located at residues 18–90; it reads FLIKSATKAV…QLKIGSIRPT (73 aa). One can recognise an HD domain in the interval 163-279; sequence HVVCMLNVAK…LHMIDNIDAK (117 aa).

Belongs to the YhaM family.

In terms of biological role, shows a 3'-5' exoribonuclease activity. In Halalkalibacterium halodurans (strain ATCC BAA-125 / DSM 18197 / FERM 7344 / JCM 9153 / C-125) (Bacillus halodurans), this protein is 3'-5' exoribonuclease YhaM.